Here is a 316-residue protein sequence, read N- to C-terminus: Pantothenate kinase (316 aa).

Position 99-106 (99-106 (GSVAVGKS)) interacts with ATP.

This sequence belongs to the prokaryotic pantothenate kinase family.

The protein localises to the cytoplasm. It carries out the reaction (R)-pantothenate + ATP = (R)-4'-phosphopantothenate + ADP + H(+). It functions in the pathway cofactor biosynthesis; coenzyme A biosynthesis; CoA from (R)-pantothenate: step 1/5. The polypeptide is Pantothenate kinase (coaA) (Pasteurella multocida (strain Pm70)).